The sequence spans 162 residues: Peptide deformylase-like (162 aa).

The protein belongs to the polypeptide deformylase family.

The sequence is that of Peptide deformylase-like from Staphylococcus epidermidis (strain ATCC 35984 / DSM 28319 / BCRC 17069 / CCUG 31568 / BM 3577 / RP62A).